Consider the following 162-residue polypeptide: MYKIQLLSCIALTLALVANGAPTSSSTGNTMKEVKSLLLDLQLLLEKVKNPENLKLSKMHTFNFFMPKVNATELKHLNCLLEELKLLEDVLSLSPSKNLNPKEIKDSMDEIKDLMDNIKRIVLELQGSETSFKCEYDAATVKAVEFLNKWITFCQRIYSTMT.

An N-terminal signal peptide occupies residues 1–20 (MYKIQLLSCIALTLALVANG). Thr23 carries O-linked (GalNAc...) threonine glycosylation. Residue Asn70 is glycosylated (N-linked (GlcNAc...) asparagine). Residues Cys79 and Cys134 are joined by a disulfide bond.

The protein belongs to the IL-2 family.

The protein resides in the secreted. Cytokine produced by activated CD4-positive helper T-cells and to a lesser extend activated CD8-positive T-cells and natural killer (NK) cells that plays pivotal roles in the immune response and tolerance. Binds to a receptor complex composed of either the high-affinity trimeric IL-2R (IL2RA/CD25, IL2RB/CD122 and IL2RG/CD132) or the low-affinity dimeric IL-2R (IL2RB and IL2RG). Interaction with the receptor leads to oligomerization and conformation changes in the IL-2R subunits resulting in downstream signaling starting with phosphorylation of JAK1 and JAK3. In turn, JAK1 and JAK3 phosphorylate the receptor to form a docking site leading to the phosphorylation of several substrates including STAT5. This process leads to activation of several pathways including STAT, phosphoinositide-3-kinase/PI3K and mitogen-activated protein kinase/MAPK pathways. Functions as a T-cell growth factor and can increase NK-cell cytolytic activity as well. Promotes strong proliferation of activated B-cells and subsequently immunoglobulin production. Plays a pivotal role in regulating the adaptive immune system by controlling the survival and proliferation of regulatory T-cells, which are required for the maintenance of immune tolerance. Moreover, participates in the differentiation and homeostasis of effector T-cell subsets, including Th1, Th2, Th17 as well as memory CD8-positive T-cells. The polypeptide is Interleukin-2 (IL2) (Cervus elaphus (Red deer)).